A 197-amino-acid polypeptide reads, in one-letter code: U1 small nuclear ribonucleoprotein C (197 aa).

The segment at 4–36 (YYCEYCDIYLTHSSPVGRRQHNQGRKHISAKIE) adopts a Matrin-type zinc-finger fold. The span at 128 to 137 (FHNNKRINNI) shows a compositional bias: low complexity. The tract at residues 128-178 (FHNNKRINNIPKPYNNYTNKPITNSSYKNDKQDYRNNNESNDNMNSNNFSN) is disordered. Residues 142-154 (NNYTNKPITNSSY) are compositionally biased toward polar residues. A compositionally biased stretch (low complexity) spans 164 to 178 (NNESNDNMNSNNFSN).

This sequence belongs to the U1 small nuclear ribonucleoprotein C family. U1 snRNP is composed of the 7 core Sm proteins B/B', D1, D2, D3, E, F and G that assemble in a heptameric protein ring on the Sm site of the small nuclear RNA to form the core snRNP, and at least 3 U1 snRNP-specific proteins U1-70K, U1-A and U1-C. U1-C interacts with U1 snRNA and the 5' splice-site region of the pre-mRNA.

It is found in the nucleus. Component of the spliceosomal U1 snRNP, which is essential for recognition of the pre-mRNA 5' splice-site and the subsequent assembly of the spliceosome. U1-C is directly involved in initial 5' splice-site recognition for both constitutive and regulated alternative splicing. The interaction with the 5' splice-site seems to precede base-pairing between the pre-mRNA and the U1 snRNA. Stimulates commitment or early (E) complex formation by stabilizing the base pairing of the 5' end of the U1 snRNA and the 5' splice-site region. The sequence is that of U1 small nuclear ribonucleoprotein C (SNRPC) from Plasmodium berghei (strain Anka).